Consider the following 224-residue polypeptide: GrpE protein homolog 2, mitochondrial (224 aa).

The N-terminal 31 residues, 1–31 (MAARLLWAVRRRMQPLAAHAASEGRGWLHPF), are a transit peptide targeting the mitochondrion. The residue at position 141 (Lys141) is an N6-acetyllysine.

The protein belongs to the GrpE family. As to quaternary structure, probable component of the PAM complex at least composed of a mitochondrial HSP70 protein, GRPEL1 or GRPEL2, TIMM44, TIMM16/PAM16 and TIMM14/DNAJC19.

Its subcellular location is the mitochondrion matrix. Functionally, essential component of the PAM complex, a complex required for the translocation of transit peptide-containing proteins from the inner membrane into the mitochondrial matrix in an ATP-dependent manner. Seems to control the nucleotide-dependent binding of mitochondrial HSP70 to substrate proteins. Stimulates ATPase activity of mt-HSP70. May also serve to modulate the interconversion of oligomeric (inactive) and monomeric (active) forms of mt-HSP70. This chain is GrpE protein homolog 2, mitochondrial (GRPEL2), found in Bos taurus (Bovine).